A 474-amino-acid polypeptide reads, in one-letter code: MFIRSNRRAKIVATVGPASSSPAILRSLFLAGVDTFRLNFSHGSRDDHAAAYRHIRALEKELGTSIGILQDLQGPKIRIGVLHEGRLQLTKDAEIRFVCGTEPGRGLMDIPLPHREIFAAVKPGDDLLIDDGRVRVRALGVSDEFIDAKVIVAGPISNRKGVNLPGTVLDISPLTPKDRKDLEFGLELGVDWIALSFVQTARDMIEARSLVSDRAGLIAKIEKPSALDEIDDIVALSDAIMVARGDLGVEIPPEDVPGRQKELIRACRIAAKPVIVATQMLDSMVTSPTPTRAEASDVAGAIYDGADAVMLSAESATGAFPVETVEIMSRIIEKTEKHKFYRPILEATEPQIAHTPPHAVATAAADVALALKAPVIVAFTVSGTTASRISRARPPLPILALTPSEQTARQLGLMWGVVSLLSPTVDTYEQSVDRATQAAVQTGLAEKSDQIVVVTGFPFATAGSTNNLRVTQAG.

Arg37 provides a ligand contact to substrate. Residues Asn39, Ser41, and Asp71 each coordinate K(+). Asn39–His42 contacts ATP. Positions 78 and 160 each coordinate ATP. Glu222 contacts Mg(2+). Substrate contacts are provided by Gly245, Asp246, and Thr278. Position 246 (Asp246) interacts with Mg(2+).

It belongs to the pyruvate kinase family. Homotetramer. It depends on Mg(2+) as a cofactor. K(+) is required as a cofactor.

The catalysed reaction is pyruvate + ATP = phosphoenolpyruvate + ADP + H(+). The protein operates within carbohydrate degradation; glycolysis; pyruvate from D-glyceraldehyde 3-phosphate: step 5/5. The chain is Pyruvate kinase (ttuE) from Agrobacterium vitis (Rhizobium vitis).